Here is a 301-residue protein sequence, read N- to C-terminus: General transcription and DNA repair factor IIH subunit TFB4 (301 aa).

The segment at 259 to 276 adopts a C4-type zinc-finger fold; the sequence is CSVCLSIFCEHHKKCSTC.

This sequence belongs to the TFB4 family. In terms of assembly, component of the 7-subunit TFIIH core complex composed of XPB, XPD, TFB1/GTF2H1, GTF2H2/P44, TFB4/GTF2H3, TFB2/GTF2H4 and TFB5/GTF2H5, which is active in NER. The core complex associates with the 3-subunit CDK-activating kinase (CAK) module composed of CYCH1/cyclin H1, CDKD and MAT1/At4g30820 to form the 10-subunit holoenzyme (holo-TFIIH) active in transcription.

It is found in the nucleus. Functionally, component of the general transcription and DNA repair factor IIH (TFIIH) core complex, which is involved in general and transcription-coupled nucleotide excision repair (NER) of damaged DNA and, when complexed to CAK, in RNA transcription by RNA polymerase II. In NER, TFIIH acts by opening DNA around the lesion to allow the excision of the damaged oligonucleotide and its replacement by a new DNA fragment. In transcription, TFIIH has an essential role in transcription initiation. When the pre-initiation complex (PIC) has been established, TFIIH is required for promoter opening and promoter escape. Phosphorylation of the C-terminal tail (CTD) of the largest subunit of RNA polymerase II by the kinase module CAK controls the initiation of transcription. This Arabidopsis thaliana (Mouse-ear cress) protein is General transcription and DNA repair factor IIH subunit TFB4.